The chain runs to 111 residues: Small ribosomal subunit protein bS16 (111 aa).

Belongs to the bacterial ribosomal protein bS16 family.

This Rickettsia typhi (strain ATCC VR-144 / Wilmington) protein is Small ribosomal subunit protein bS16.